The primary structure comprises 281 residues: ATP synthase subunit a (281 aa).

Transmembrane regions (helical) follow at residues 56-76, 117-137, 144-164, 181-201, 215-235, 237-257, and 259-279; these read KPML…WAAF, LVVS…IPVA, IIAY…TLTF, KSLG…NILI, FAGH…LNGV, IAYA…ELFI, and ALQA…AMAE.

Belongs to the ATPase A chain family. F-type ATPases have 2 components, CF(1) - the catalytic core - and CF(0) - the membrane proton channel. CF(1) has five subunits: alpha(3), beta(3), gamma(1), delta(1), epsilon(1). CF(0) has three main subunits: a(1), b(2) and c(9-12). The alpha and beta chains form an alternating ring which encloses part of the gamma chain. CF(1) is attached to CF(0) by a central stalk formed by the gamma and epsilon chains, while a peripheral stalk is formed by the delta and b chains.

It is found in the cell membrane. Key component of the proton channel; it plays a direct role in the translocation of protons across the membrane. The protein is ATP synthase subunit a of Streptomyces lividans.